Reading from the N-terminus, the 117-residue chain is Transcription elongation factor A protein-like 8 (117 aa).

Basic and acidic residues-rich tracts occupy residues 1–24 (MQKSCGENERKPQNMPKAEEDRPL) and 61–74 (YKEDSPVRHLDPEE). Positions 1–74 (MQKSCGENER…SPVRHLDPEE (74 aa)) are disordered. Residues 73–100 (EEMIRGADELERLREEIRRVRNKFVMMH) adopt a coiled-coil conformation.

This sequence belongs to the TFS-II family. TFA subfamily.

It is found in the nucleus. In terms of biological role, may be involved in transcriptional regulation. The sequence is that of Transcription elongation factor A protein-like 8 (TCEAL8) from Bos taurus (Bovine).